The chain runs to 208 residues: UPF0637 protein BCG9842_B1177 (208 aa).

Belongs to the UPF0637 family.

In Bacillus cereus (strain G9842), this protein is UPF0637 protein BCG9842_B1177.